The sequence spans 503 residues: Splicing factor 3A subunit 3 (503 aa).

Disordered regions lie at residues proline 296–arginine 317 and alanine 341–asparagine 384. Residues aspartate 358 to aspartate 377 show a composition bias toward acidic residues. Serine 360, serine 365, and serine 367 each carry phosphoserine. Residues tyrosine 408–cysteine 439 form a Matrin-type zinc finger.

This sequence belongs to the SF3A3 family. As to quaternary structure, probable component of a the U2 small nuclear ribonucleoproteins complex (U2 snRNP). In terms of tissue distribution, ubiquitous. In ovaries and testes, it is expressed in all germ and somatic cells. Highly expressed in spermatogonias and spermatocytes. Highly expressed in the germ cells of larval testes, while it is weakly expressed in fat body cells, in polyploid nuclei of salivary glands, and in larval brain.

The protein localises to the nucleus. Probable subunit of a splicing factor complex required for 'A' complex assembly formed by the stable binding of U2 snRNP to the branchpoint sequence (BPS) in pre-mRNA. Involved in male fertility. This chain is Splicing factor 3A subunit 3 (noi), found in Drosophila melanogaster (Fruit fly).